A 75-amino-acid chain; its full sequence is Pi-hexatoxin-Hi1b (75 aa).

6 disulfide bridges follow: Cys-3–Cys-18, Cys-10–Cys-23, Cys-17–Cys-33, Cys-40–Cys-55, Cys-47–Cys-60, and Cys-54–Cys-71. Domain repeat units follow at residues 3-33 (CIRK…FEVC) and 40-71 (CLVK…SSVC). Residues 3-71 (CIRKWLSCVD…KRSGNKSSVC (69 aa)) are 2 X approximate repeats with cysteine pattern C-C-CC-C-C.

The protein belongs to the psalmotoxin-1 family. Double-knot toxin subfamily. In terms of tissue distribution, expressed by the venom gland.

It localises to the secreted. Functionally, this toxin potently and selectively inhibits ASIC1a, an isoform of the gene ASIC1. It incompletely inhibits ASIC1a activation in a pH-independent and slowly reversible manner. This toxin acts by binding to and stabilizing the closed state of the channel, thereby impeding the transition into a conducting state. This toxin may bind to the acidic pocket of ASIC1a, since mutation of a key residue of this pocket (Arg-350) abolishes the ability of the toxin to inhibit ASIC1a. In vivo, this toxin protects the brain from neuronal injury when administered up to 8 hours after stroke onset. The polypeptide is Pi-hexatoxin-Hi1b (Hadronyche infensa (Fraser island funnel-web spider)).